A 187-amino-acid chain; its full sequence is Putative acyl-coenzyme A oxidase At3g06690 (187 aa).

Positions 1–21 (MTKEPIYSPRMLHRDPDSPRP) are disordered.

This sequence belongs to the acyl-CoA oxidase family.

It carries out the reaction a 2,3-saturated acyl-CoA + O2 = a (2E)-enoyl-CoA + H2O2. This is Putative acyl-coenzyme A oxidase At3g06690 from Arabidopsis thaliana (Mouse-ear cress).